Reading from the N-terminus, the 211-residue chain is Endo-1,4-beta-xylanase 6 (211 aa).

The signal sequence occupies residues 1-16 (MKVTAAFAGLLVTALA). In terms of domain architecture, GH11 spans 19-210 (APEPVLVSRS…GAGSASVTIS (192 aa)). The Nucleophile role is filled by E106. E197 (proton donor) is an active-site residue.

The protein belongs to the glycosyl hydrolase 11 (cellulase G) family.

Its subcellular location is the secreted. The enzyme catalyses Endohydrolysis of (1-&gt;4)-beta-D-xylosidic linkages in xylans.. It functions in the pathway glycan degradation; xylan degradation. Functionally, endo-1,4-beta-xylanase involved in the hydrolysis of xylan, a major structural heterogeneous polysaccharide found in plant biomass representing the second most abundant polysaccharide in the biosphere, after cellulose. The polypeptide is Endo-1,4-beta-xylanase 6 (XYN6) (Aspergillus niger).